The primary structure comprises 262 residues: MKPLIQVQGVSQRFSTASGEFLALQNVSFDIYEGETISLIGHSGCGKSTLLNLIAGIALPTEGGLLCDNREIAGPGPERAVVFQNHSLLPWLTCFDNVALAVDQVFRRSMSKGERKEWIEHNLERVQMGHALHKRPGEISGGMKQRVGIARALAMKPKVLLLDEPFGALDALTRAHLQDAVMQIQQSLNTTIVMITHDVDEAVLLSDRVLMMTNGPAATVGEILDVNLPRPRNRVQLADDSRYHHLRQQILHFLYEKQPKAA.

Residues 5-239 form the ABC transporter domain; it reads IQVQGVSQRF…RPRNRVQLAD (235 aa). 41–48 provides a ligand contact to ATP; the sequence is GHSGCGKS.

Belongs to the ABC transporter superfamily.

The protein localises to the cell membrane. In terms of biological role, probably part of a high-affinity binding-protein-dependent transport system for nitrate. Probably responsible for energy coupling to the transport system. This chain is Nitrate transport protein NasD (nasD), found in Klebsiella oxytoca.